Reading from the N-terminus, the 191-residue chain is Signal peptidase IB (191 aa).

At 1-7 the chain is on the cytoplasmic side; the sequence is MKKELLE. A helical membrane pass occupies residues 8-28; it reads WIISIAVAFVILFIVGKFIVT. Over 29 to 191 the chain is Extracellular; sequence PYTIKGESMD…YNFNPENTKN (163 aa). Catalysis depends on residues S36 and K77.

It belongs to the peptidase S26 family.

Its subcellular location is the cell membrane. It carries out the reaction Cleavage of hydrophobic, N-terminal signal or leader sequences from secreted and periplasmic proteins.. Its function is as follows. Essential for cell viability. The polypeptide is Signal peptidase IB (spsB) (Staphylococcus aureus (strain MRSA252)).